Reading from the N-terminus, the 200-residue chain is MDADGLPIVGSGVDLTKVPAIQQRRIVAFLNQFIVHTVRFLNRFSTVCEEKLSTVSLRIQQIETTLSILEAKLASIPGLEEVTVDGVRAPAETNGPAADTSRATAPPAEASQQTQAAPQEPKTEAPAENIMTVAKDPRYARYLKMVQVGVPVMAIKNKMMMEGLDPNLLDTPDAAVPDASKKRLEEQDDDSSGSESSFSD.

The stretch at 56–76 forms a coiled coil; sequence SLRIQQIETTLSILEAKLASI. Disordered regions lie at residues 87–130 and 165–200; these read VRAP…AENI and DPNL…SFSD.

Belongs to the CCDC53 family. In terms of assembly, component of the WASH complex.

The sequence is that of WASH complex subunit 3 from Danio rerio (Zebrafish).